The sequence spans 337 residues: Casein kinase I isoform alpha (337 aa).

In terms of domain architecture, Protein kinase spans 17–285 (YKLVRKIGSG…YLRQLFRILF (269 aa)). Residues 23-31 (IGSGSFGDI) and K46 contribute to the ATP site. The active-site Proton acceptor is D136. The segment covering 309–325 (AASSSGQGQQAQTPTGK) has biased composition (low complexity). The interval 309–337 (AASSSGQGQQAQTPTGKQTDKSKSNMKGF) is disordered.

It belongs to the protein kinase superfamily. CK1 Ser/Thr protein kinase family. Casein kinase I subfamily. In terms of processing, autophosphorylated.

It is found in the cytoplasm. Its subcellular location is the cytoskeleton. It localises to the microtubule organizing center. The protein resides in the centrosome. The protein localises to the chromosome. It is found in the centromere. Its subcellular location is the kinetochore. It localises to the nucleus speckle. The protein resides in the cilium basal body. The protein localises to the spindle. It carries out the reaction L-seryl-[protein] + ATP = O-phospho-L-seryl-[protein] + ADP + H(+). It catalyses the reaction L-threonyl-[protein] + ATP = O-phospho-L-threonyl-[protein] + ADP + H(+). Its function is as follows. Casein kinases are operationally defined by their preferential utilization of acidic proteins such as caseins as substrates. It can phosphorylate a large number of proteins. Participates in Wnt signaling. May play a role in segregating chromosomes during mitosis. May play a role in keratin cytoskeleton disassembly. This Gallus gallus (Chicken) protein is Casein kinase I isoform alpha (CSNK1A1).